A 1788-amino-acid polypeptide reads, in one-letter code: Laminin subunit beta-1 (1788 aa).

A signal peptide spans Met1–Ser24. Residues Asp23–Phe43 are disordered. Residues Glu50–Ser287 enclose the Laminin N-terminal domain. Residues Asn138, Asn201, and Asn232 are each glycosylated (N-linked (GlcNAc...) asparagine). 19 disulfides stabilise this stretch: Cys288-Cys297, Cys290-Cys318, Cys320-Cys329, Cys332-Cys352, Cys355-Cys364, Cys357-Cys382, Cys385-Cys394, Cys397-Cys415, Cys418-Cys431, Cys420-Cys446, Cys448-Cys457, Cys460-Cys475, Cys478-Cys491, Cys480-Cys498, Cys500-Cys509, Cys512-Cys526, Cys529-Cys541, Cys531-Cys548, and Cys550-Cys559. Laminin EGF-like domains lie at Cys288 to Lys354, Cys355 to Pro417, Cys418 to Pro477, and Cys478 to Leu528. Asn487 is a glycosylation site (N-linked (GlcNAc...) asparagine). The 31-residue stretch at Cys529–Cys559 folds into the Laminin EGF-like 5; truncated domain. The region spanning Phe567–His783 is the Laminin IV type B domain. Asn591 carries N-linked (GlcNAc...) asparagine glycosylation. The short motif at Arg641 to Asp643 is the Cell attachment site element. 32 cysteine pairs are disulfide-bonded: Cys789-Cys801, Cys791-Cys808, Cys810-Cys819, Cys822-Cys834, Cys837-Cys849, Cys839-Cys856, Cys858-Cys867, Cys870-Cys880, Cys883-Cys892, Cys885-Cys899, Cys902-Cys911, Cys914-Cys930, Cys933-Cys949, Cys935-Cys960, Cys962-Cys971, Cys974-Cys988, Cys991-Cys1005, Cys993-Cys1012, Cys1015-Cys1024, Cys1027-Cys1040, Cys1043-Cys1057, Cys1045-Cys1064, Cys1066-Cys1075, Cys1078-Cys1091, Cys1094-Cys1106, Cys1096-Cys1113, Cys1115-Cys1124, Cys1127-Cys1139, Cys1142-Cys1154, Cys1144-Cys1161, Cys1163-Cys1172, and Cys1175-Cys1186. Laminin EGF-like domains follow at residues Cys789–Ala836, Cys837–Val882, Cys883–Pro932, Cys933–Lys990, Cys991–Gln1042, Cys1043–Ser1093, Cys1094–Pro1141, and Cys1142–Pro1188. An N-linked (GlcNAc...) asparagine glycan is attached at Asn1051. Positions Cys1189–Val1405 are domain II. N-linked (GlcNAc...) asparagine glycosylation is found at Asn1246, Asn1301, Asn1330, and Asn1341. Residues Glu1255–Val1405 adopt a coiled-coil conformation. Positions Cys1406–Glu1432 are domain alpha. The segment at His1433–Thr1788 is domain I. Residues Ile1453–Leu1505 are a coiled coil. Asn1473, Asn1493, and Asn1515 each carry an N-linked (GlcNAc...) asparagine glycan. The stretch at Glu1540–Ala1561 forms a coiled coil. N-linked (GlcNAc...) asparagine glycans are attached at residues Asn1581, Asn1644, and Asn1703. Residues Gln1608–Ile1762 adopt a coiled-coil conformation. Residues Gly1690–Arg1719 form a disordered region. A compositionally biased stretch (polar residues) spans Asn1693–Asp1708. The span at Arg1709–Arg1719 shows a compositional bias: basic and acidic residues.

In terms of assembly, laminin is a complex glycoprotein, consisting of three different polypeptide chains (alpha, beta, gamma), which are bound to each other by disulfide bonds into a cross-shaped molecule comprising one long and three short arms with globules at each end. Found in the basement membranes (major component).

The protein localises to the secreted. It is found in the extracellular space. The protein resides in the extracellular matrix. It localises to the basement membrane. Functionally, binding to cells via a high affinity receptor, laminin is thought to mediate the attachment, migration and organization of cells into tissues during embryonic development by interacting with other extracellular matrix components. Required for Ndg localization to the basement membrane. The chain is Laminin subunit beta-1 (LanB1) from Drosophila melanogaster (Fruit fly).